Here is a 365-residue protein sequence, read N- to C-terminus: S-adenosylmethionine:tRNA ribosyltransferase-isomerase (365 aa).

It belongs to the QueA family. As to quaternary structure, monomer.

It localises to the cytoplasm. It carries out the reaction 7-aminomethyl-7-carbaguanosine(34) in tRNA + S-adenosyl-L-methionine = epoxyqueuosine(34) in tRNA + adenine + L-methionine + 2 H(+). The protein operates within tRNA modification; tRNA-queuosine biosynthesis. Its function is as follows. Transfers and isomerizes the ribose moiety from AdoMet to the 7-aminomethyl group of 7-deazaguanine (preQ1-tRNA) to give epoxyqueuosine (oQ-tRNA). This chain is S-adenosylmethionine:tRNA ribosyltransferase-isomerase, found in Prochlorococcus marinus (strain NATL2A).